We begin with the raw amino-acid sequence, 626 residues long: Carnitine O-acetyltransferase (626 aa).

An N6-succinyllysine modification is found at K93. An N6-acetyllysine; alternate modification is found at K261. K261 is modified (N6-succinyllysine; alternate). K268 is modified (N6-acetyllysine). H343 acts as the Proton acceptor in catalysis. CoA-binding positions include K419 and 423–430 (KSEKLSPD). The (R)-carnitine site is built by Y452 and S454. Residue S456 coordinates CoA. T465 lines the (R)-carnitine pocket. CoA is bound by residues R504 and Q555. The Microbody targeting signal signature appears at 624–626 (AKL).

Belongs to the carnitine/choline acetyltransferase family. Monomer. Mostly in skeletal muscle, less in heart, liver and pancreas, only weakly detectable in brain, placenta, lung and kidney.

It is found in the endoplasmic reticulum. It localises to the peroxisome. Its subcellular location is the mitochondrion inner membrane. The protein localises to the mitochondrion. It carries out the reaction (R)-carnitine + acetyl-CoA = O-acetyl-(R)-carnitine + CoA. The catalysed reaction is propanoyl-CoA + (R)-carnitine = O-propanoyl-(R)-carnitine + CoA. It catalyses the reaction butanoyl-CoA + (R)-carnitine = O-butanoyl-(R)-carnitine + CoA. The enzyme catalyses hexanoyl-CoA + (R)-carnitine = O-hexanoyl-(R)-carnitine + CoA. It carries out the reaction octanoyl-CoA + (R)-carnitine = O-octanoyl-(R)-carnitine + CoA. The catalysed reaction is decanoyl-CoA + (R)-carnitine = O-decanoyl-(R)-carnitine + CoA. It catalyses the reaction 3-methylbutanoyl-CoA + (R)-carnitine = O-3-methylbutanoyl-(R)-carnitine + CoA. The enzyme catalyses 2-methylpropanoyl-CoA + (R)-carnitine = O-isobutanoyl-(R)-carnitine + CoA. It carries out the reaction 2-methylbutanoyl-CoA + (R)-carnitine = O-2-methylbutanoyl-(R)-carnitine + CoA. The catalysed reaction is acetoacetyl-CoA + (R)-carnitine = O-3-oxobutanoyl-(R)-carnitine + CoA. It catalyses the reaction 3-hydroxybutanoyl-CoA + (R)-carnitine = O-3-hydroxybutanoyl-(R)-carnitine + CoA. The enzyme catalyses 4,8-dimethylnonanoyl-CoA + (R)-carnitine = O-4,8-dimethylnonanoyl-(R)-carnitine + CoA. It carries out the reaction 2,6-dimethylheptanoyl-CoA + (R)-carnitine = O-2,6-dimethylheptanoyl-(R)-carnitine + CoA. Catalyzes the reversible transfer of acyl groups from carnitine to coenzyme A (CoA) and regulates the acyl-CoA/CoA ratio. Also plays a crucial role in the transport of fatty acids for beta-oxidation. Responsible for the synthesis of short- and branched-chain acylcarnitines. Active towards some branched-chain amino acid oxidation pathway (BCAAO) intermediates. Trans-2-enoyl-CoAs and 2-methylacyl-CoAs are poor substrates. The polypeptide is Carnitine O-acetyltransferase (Homo sapiens (Human)).